The chain runs to 130 residues: Small ribosomal subunit protein uS8 (130 aa).

The protein belongs to the universal ribosomal protein uS8 family. Part of the 30S ribosomal subunit.

In terms of biological role, one of the primary rRNA binding proteins, it binds directly to 16S rRNA central domain where it helps coordinate assembly of the platform of the 30S subunit. This chain is Small ribosomal subunit protein uS8, found in Cenarchaeum symbiosum (strain A).